We begin with the raw amino-acid sequence, 160 residues long: Nucleotide-binding protein Tola_0795 (160 aa).

It belongs to the YajQ family.

In terms of biological role, nucleotide-binding protein. The chain is Nucleotide-binding protein Tola_0795 from Tolumonas auensis (strain DSM 9187 / NBRC 110442 / TA 4).